Consider the following 258-residue polypeptide: Protein UL24 homolog (258 aa).

It belongs to the herpesviridae UL24 family.

The protein localises to the virion. Its subcellular location is the host cytoplasm. It localises to the host nucleus. The protein resides in the host nucleolus. It is found in the host Golgi apparatus. In terms of biological role, may participate in nuclear egress of viral particles. Plays a role in the dispersal of several host nucleolar proteins including NCL/nucleolin and NPM1. Since deletion of host NCL/nucleolin negatively impact on nuclear egress, UL24 supposedly acts on this process through its effect on host nucleoli. The chain is Protein UL24 homolog from Homo sapiens (Human).